The chain runs to 216 residues: FMN-dependent NADH:quinone oxidoreductase (216 aa).

FMN is bound by residues 15 to 17 and 139 to 142; these read SVS and SRGG.

Belongs to the azoreductase type 1 family. In terms of assembly, homodimer. The cofactor is FMN.

It catalyses the reaction 2 a quinone + NADH + H(+) = 2 a 1,4-benzosemiquinone + NAD(+). The catalysed reaction is N,N-dimethyl-1,4-phenylenediamine + anthranilate + 2 NAD(+) = 2-(4-dimethylaminophenyl)diazenylbenzoate + 2 NADH + 2 H(+). Functionally, quinone reductase that provides resistance to thiol-specific stress caused by electrophilic quinones. In terms of biological role, also exhibits azoreductase activity. Catalyzes the reductive cleavage of the azo bond in aromatic azo compounds to the corresponding amines. The polypeptide is FMN-dependent NADH:quinone oxidoreductase (Acidovorax ebreus (strain TPSY) (Diaphorobacter sp. (strain TPSY))).